Here is a 70-residue protein sequence, read N- to C-terminus: Turripeptide Gsp9.3 (70 aa).

The signal sequence occupies residues 1–20 (MKVYCLLLVLLVGLVSQAHG). The 50-residue stretch at 21 to 70 (QLDKKCQMVCTFDYRPVCGSDGRTYPNKCTLTSTACMSQRSITVFHDGEC) folds into the Kazal-like domain. Intrachain disulfides connect C26–C56, C30–C49, and C38–C70.

It belongs to the conopeptide P-like superfamily. As to expression, expressed by the venom duct.

Its subcellular location is the secreted. Functionally, acts as a neurotoxin by inhibiting an ion channel. May also act as a serine protease inhibitor, since it possess the kazal serine protease inhibitor signature. This is Turripeptide Gsp9.3 from Gemmula speciosa (Splendid gem-turris).